Here is a 680-residue protein sequence, read N- to C-terminus: DNA ligase (680 aa).

NAD(+) contacts are provided by residues 38-42, 87-88, and glutamate 119; these read DAEYD and SL. The active-site N6-AMP-lysine intermediate is the lysine 121. The NAD(+) site is built by arginine 142, glutamate 179, lysine 296, and lysine 320. Residues cysteine 414, cysteine 417, cysteine 432, and cysteine 438 each contribute to the Zn(2+) site. Positions 597 to 680 constitute a BRCT domain; it reads IEDLPLKGLT…DLLRKHGRLE (84 aa).

This sequence belongs to the NAD-dependent DNA ligase family. LigA subfamily. The cofactor is Mg(2+). Mn(2+) is required as a cofactor.

The catalysed reaction is NAD(+) + (deoxyribonucleotide)n-3'-hydroxyl + 5'-phospho-(deoxyribonucleotide)m = (deoxyribonucleotide)n+m + AMP + beta-nicotinamide D-nucleotide.. Functionally, DNA ligase that catalyzes the formation of phosphodiester linkages between 5'-phosphoryl and 3'-hydroxyl groups in double-stranded DNA using NAD as a coenzyme and as the energy source for the reaction. It is essential for DNA replication and repair of damaged DNA. In Cellvibrio japonicus (strain Ueda107) (Pseudomonas fluorescens subsp. cellulosa), this protein is DNA ligase.